The chain runs to 169 residues: Nucleoside diphosphate kinase 3 (169 aa).

The ADP site is built by Lys29, Arg105, Thr111, Arg122, Val129, and Asn132. His135 serves as the catalytic Pros-phosphohistidine intermediate.

This sequence belongs to the NDK family. Homohexamer. Interacts (via its N-terminal region) with KAT5; this interaction enables recruitment of NME3 at DNA damage sites where it plays a role in the repair of DNA. Found in association with several ciliary nephronophthisis proteins, including NEK8, CEP164, ANKS6. Mg(2+) serves as cofactor.

It is found in the mitochondrion outer membrane. It localises to the cytoplasm. The protein resides in the cytoskeleton. The protein localises to the cilium basal body. The enzyme catalyses a 2'-deoxyribonucleoside 5'-diphosphate + ATP = a 2'-deoxyribonucleoside 5'-triphosphate + ADP. The catalysed reaction is a ribonucleoside 5'-diphosphate + ATP = a ribonucleoside 5'-triphosphate + ADP. Catalyzes the phosphorylation of ribonucleosides and deoxyribonucleoside diphosphates, other than ATP, into the corresponding triphosphates with ATP as the major phosphate donor. The ATP gamma phosphate is transferred to the nucleoside diphosphate beta phosphate via a ping-pong mechanism, using a phosphorylated active-site intermediate. Through the catalyzed exchange of gamma-phosphate between di- and triphosphonucleosides participates in regulation of intracellular nucleotide homeostasis. Inhibits granulocyte differentiation. May be required for ciliary function during renal development. Its function is as follows. Independently of its kinase activity, facilitates mitochondrial tethering prior to membrane fusion through its direct membrane-binding and hexamerization. Implicated in repair of both single- and double-stranded breaks in DNA through its association with the ribonucleotide reductase complex (RNR complex) via its interaction with the histone acetyltransferase KAT5, this interaction enables recruitment of NME3 at DNA damage sites where it plays a role in the repair of DNA, independently of its kinase activity. The protein is Nucleoside diphosphate kinase 3 (Nme3) of Mus musculus (Mouse).